The primary structure comprises 66 residues: DNA gyrase inhibitor YacG (66 aa).

Zn(2+)-binding residues include C9, C12, C28, and C32. The interval 45 to 66 (HKIAGAEESEDELYSGDLEPRH) is disordered.

It belongs to the DNA gyrase inhibitor YacG family. In terms of assembly, interacts with GyrB. It depends on Zn(2+) as a cofactor.

Its function is as follows. Inhibits all the catalytic activities of DNA gyrase by preventing its interaction with DNA. Acts by binding directly to the C-terminal domain of GyrB, which probably disrupts DNA binding by the gyrase. In Pseudomonas entomophila (strain L48), this protein is DNA gyrase inhibitor YacG.